Consider the following 137-residue polypeptide: uncharacterized protein (137 aa).

To E.coli YfdK.

This is an uncharacterized protein from Escherichia coli (strain K12).